An 89-amino-acid chain; its full sequence is UPF0297 protein OB2008 (89 aa).

It belongs to the UPF0297 family.

This chain is UPF0297 protein OB2008, found in Oceanobacillus iheyensis (strain DSM 14371 / CIP 107618 / JCM 11309 / KCTC 3954 / HTE831).